Consider the following 255-residue polypeptide: tRNA (guanine-N(1)-)-methyltransferase (255 aa).

Residues Gly-113 and 133-138 (IGDYVL) contribute to the S-adenosyl-L-methionine site.

It belongs to the RNA methyltransferase TrmD family. Homodimer.

The protein resides in the cytoplasm. The catalysed reaction is guanosine(37) in tRNA + S-adenosyl-L-methionine = N(1)-methylguanosine(37) in tRNA + S-adenosyl-L-homocysteine + H(+). Functionally, specifically methylates guanosine-37 in various tRNAs. This is tRNA (guanine-N(1)-)-methyltransferase from Klebsiella pneumoniae subsp. pneumoniae (strain ATCC 700721 / MGH 78578).